Consider the following 307-residue polypeptide: Aspartate carbamoyltransferase catalytic subunit (307 aa).

The carbamoyl phosphate site is built by R59 and T60. K87 contacts L-aspartate. Carbamoyl phosphate is bound by residues R109, H137, and Q140. L-aspartate is bound by residues R173 and R223. Carbamoyl phosphate contacts are provided by G266 and P267.

It belongs to the aspartate/ornithine carbamoyltransferase superfamily. ATCase family. In terms of assembly, heterododecamer (2C3:3R2) of six catalytic PyrB chains organized as two trimers (C3), and six regulatory PyrI chains organized as three dimers (R2).

It catalyses the reaction carbamoyl phosphate + L-aspartate = N-carbamoyl-L-aspartate + phosphate + H(+). Its pathway is pyrimidine metabolism; UMP biosynthesis via de novo pathway; (S)-dihydroorotate from bicarbonate: step 2/3. Its function is as follows. Catalyzes the condensation of carbamoyl phosphate and aspartate to form carbamoyl aspartate and inorganic phosphate, the committed step in the de novo pyrimidine nucleotide biosynthesis pathway. In Helicobacter pylori (strain ATCC 700392 / 26695) (Campylobacter pylori), this protein is Aspartate carbamoyltransferase catalytic subunit.